Here is a 511-residue protein sequence, read N- to C-terminus: Cytochrome P450 monooxygenase roqR (511 aa).

Residues 1 to 23 (MSGYVLLTVQLAAVLLLVTLWRA) form the signal peptide. Residues asparagine 364, asparagine 373, and asparagine 383 are each glycosylated (N-linked (GlcNAc...) asparagine). Cysteine 455 serves as a coordination point for heme.

It belongs to the cytochrome P450 family. It depends on heme as a cofactor.

The protein operates within alkaloid biosynthesis. Functionally, cytochrome P450 monooxygenase; part of the gene cluster that mediates the biosynthesis of the mycotoxins roquefortine C and meleagrin. The first stage is catalyzed by the dipeptide synthase roqA which condenses histidine and tryptophan to produce histidyltryptophanyldiketopiperazine (HTD). HTD is then converted to roquefortine C through two possible pathways. In the first pathway, prenyltransferase roqD transforms HTD to the intermediate roquefortine D, which is in turn converted to roquefortine C by the cytochrome P450 monooxygenase roqR. In the second pathway, HTD is first converted to the intermediate dehydrohistidyltryptophanyldi-ketopiperazine (DHTD) by roqR which is then prenylated by roqD to form roquefortine C. Roquefortine C can be further transformed to meleagrin via three more reactions including oxydation to glandicolin A by roqM, which is further reduced to glandicoline B by roqO. Finally, glandicoline B is converted to meleagrin by the glandicoline B O-methyltransferase roqN. More studies identified further branching and additional metabolites produced by the roquefortine/meleagrin cluster, including roquefortine F, roquefortine L, roquefortine M, roquefortine N and neoxaline. In Penicillium rubens (strain ATCC 28089 / DSM 1075 / NRRL 1951 / Wisconsin 54-1255) (Penicillium chrysogenum), this protein is Cytochrome P450 monooxygenase roqR.